We begin with the raw amino-acid sequence, 163 residues long: Photosystem II extrinsic protein V (163 aa).

A signal peptide spans Met-1–Ala-26. Heme c is bound by residues Cys-63, Cys-66, His-67, and Met-130.

The protein belongs to the cytochrome c family. PsbV subfamily. As to quaternary structure, PSII is composed of 1 copy each of membrane proteins PsbA, PsbB, PsbC, PsbD, PsbE, PsbF, PsbH, PsbI, PsbJ, PsbK, PsbL, PsbM, PsbT, PsbY, PsbZ, Psb30/Ycf12, at least 3 peripheral proteins of the oxygen-evolving complex and a large number of cofactors. It forms dimeric complexes. Heme c is required as a cofactor.

Its subcellular location is the plastid. It localises to the chloroplast thylakoid membrane. One of the extrinsic, lumenal subunits of photosystem II (PSII). PSII is a light-driven water plastoquinone oxidoreductase, using light energy to abstract electrons from H(2)O, generating a proton gradient subsequently used for ATP formation. The extrinsic proteins stabilize the structure of photosystem II oxygen-evolving complex (OEC), the ion environment of oxygen evolution and protect the OEC against heat-induced inactivation. This chain is Photosystem II extrinsic protein V, found in Phaeodactylum tricornutum (strain CCAP 1055/1).